Consider the following 192-residue polypeptide: Probable metallophosphoesterase MJ0623 (192 aa).

Aspartate 41, histidine 43, aspartate 70, asparagine 92, histidine 115, histidine 144, and histidine 146 together coordinate a divalent metal cation.

Belongs to the metallophosphoesterase superfamily. YfcE family. It depends on a divalent metal cation as a cofactor.

The polypeptide is Probable metallophosphoesterase MJ0623 (Methanocaldococcus jannaschii (strain ATCC 43067 / DSM 2661 / JAL-1 / JCM 10045 / NBRC 100440) (Methanococcus jannaschii)).